A 310-amino-acid chain; its full sequence is p-hydroxybenzoic acid efflux pump subunit AaeA (310 aa).

A helical membrane pass occupies residues alanine 12–tyrosine 32.

The protein belongs to the membrane fusion protein (MFP) (TC 8.A.1) family.

It is found in the cell inner membrane. Its function is as follows. Forms an efflux pump with AaeB. The chain is p-hydroxybenzoic acid efflux pump subunit AaeA from Salmonella gallinarum (strain 287/91 / NCTC 13346).